The following is a 273-amino-acid chain: Soluble P-type ATPase-like phosphatase (273 aa).

The active-site 4-aspartylphosphate intermediate is the aspartate 8.

The protein belongs to the cation transport ATPase (P-type) (TC 3.A.3) family. Type IB subfamily. Mg(2+) is required as a cofactor.

Inhibited by orthovanadate. Functionally, most probably acts as a phosphatase in the cytosol. The chain is Soluble P-type ATPase-like phosphatase (patS) from Methanocaldococcus jannaschii (strain ATCC 43067 / DSM 2661 / JAL-1 / JCM 10045 / NBRC 100440) (Methanococcus jannaschii).